The sequence spans 293 residues: Beta-lactamase (293 aa).

A signal peptide spans 1-27 (MRFTATVLSRVATGLALGLSMATASLA). The active-site Acyl-ester intermediate is S74. 238–240 (KSG) contributes to the substrate binding site.

Belongs to the class-A beta-lactamase family.

It is found in the periplasm. It carries out the reaction a beta-lactam + H2O = a substituted beta-amino acid. Its function is as follows. Hydrolyzes beta-lactams antibiotics. Rates of hydrolysis relative to benzylpenicillin =100: ampicillin = 27, carbenicillin = 25, cloxacillin = 0, cephaloridine = 4. The polypeptide is Beta-lactamase (Rhodobacter capsulatus (Rhodopseudomonas capsulata)).